Here is a 320-residue protein sequence, read N- to C-terminus: Integrin-binding sialoprotein (320 aa).

Residues 1–16 (MKTALILLCILGMASA) form the signal peptide. A phosphoserine mark is found at Ser-31, Ser-68, Ser-76, Ser-77, and Ser-96. Disordered stretches follow at residues 60 to 117 (PVQG…VTAS), 136 to 225 (LPKK…RELT), and 238 to 264 (FQQT…VEYG). Over residues 67-106 (SSEENGDGDSSEEEGEEEETSNEEENNEDSEGNEDQEAEA) the composition is skewed to acidic residues. The N-linked (GlcNAc...) asparagine glycan is linked to Asn-108. Positions 139–152 (KAGDAEGKAPKMKE) are enriched in basic and acidic residues. Ser-153 is subject to Phosphoserine. Residues 153 to 176 (SDEEEEEEEEEENENEEAEVDENE) show a composition bias toward acidic residues. Polar residues-rich tracts occupy residues 177-188 (QVVNGTSTNSTE) and 249-261 (GTTS…SSTV). N-linked (GlcNAc...) asparagine glycans are attached at residues Asn-180 and Asn-185. The Integrin-binding motif signature appears at 289–291 (RGD). Residues Tyr-316 and Tyr-317 each carry the sulfotyrosine modification.

In terms of assembly, monomer. Interacts with integrins; the interaction promotes cell adhesion.

The protein resides in the secreted. Functionally, binds tightly to hydroxyapatite. Appears to form an integral part of the mineralized matrix. Probably important to cell-matrix interaction. Promotes adhesion and migration of various cells via the alpha-V/beta-3 integrin receptor (ITGAV:ITGB3). The chain is Integrin-binding sialoprotein (Ibsp) from Rattus norvegicus (Rat).